A 919-amino-acid chain; its full sequence is Glutamate receptor ionotropic, kainate 3 (919 aa).

An N-terminal signal peptide occupies residues 1–31 (MTAPWRRLRSLVWEYWAGLLVCAFWIPDSRG). The Extracellular portion of the chain corresponds to 32–563 (MPHVIRIGGI…VFSFLNPLSP (532 aa)). 7 N-linked (GlcNAc...) asparagine glycosylation sites follow: Asn70, Asn76, Asn278, Asn381, Asn415, Asn426, and Asn433. An intrachain disulfide couples Cys99 to Cys350. 3 residues coordinate L-glutamate: Pro518, Thr520, and Arg525. 2 N-linked (GlcNAc...) asparagine glycosylation sites follow: Asn548 and Asn551. A helical transmembrane segment spans residues 564–584 (DIWMYVLLAYLGVSCVLFVIA). Residues 585–636 (RFSPYEWYDAHPCNPGSEVVENNFTLLNSFWFGMGSLMQQGSELMPKALSTR) lie on the Cytoplasmic side of the membrane. A helical transmembrane segment spans residues 637-657 (IIGGIWWFFTLIIISSYTANL). Residues 658–820 (AAFLTVERME…KEASALGIQK (163 aa)) lie on the Extracellular side of the membrane. L-glutamate contacts are provided by Ala691, Thr692, and Glu739. Asn752 carries N-linked (GlcNAc...) asparagine glycosylation. A helical transmembrane segment spans residues 821 to 841 (IGGIFIVLAAGLVLSVLVAVG). Residues 842 to 919 (EFVYKLRKTA…CSTSLAPVFP (78 aa)) are Cytoplasmic-facing. Ser869 is modified (phosphoserine). A Glycyl lysine isopeptide (Lys-Gly) (interchain with G-Cter in SUMO1) cross-link involves residue Lys887.

This sequence belongs to the glutamate-gated ion channel (TC 1.A.10.1) family. GRIK3 subfamily. Homotetramer, and heterotetramer with either GRIK4 or GRIK5. Can form functional heteromeric receptors with GRIK2. Interacts with PRKCABP. Interacts with NETO2.

The protein localises to the cell membrane. The protein resides in the postsynaptic cell membrane. It carries out the reaction Ca(2+)(in) = Ca(2+)(out). Ionotropic glutamate receptor that functions as a cation-permeable ligand-gated ion channel, gated by L-glutamate and the glutamatergic agonist kainic acid. Binding of the excitatory neurotransmitter L-glutamate induces a conformation change, leading to the opening of the cation channel, and thereby converts the chemical signal to an electrical impulse. The receptor then desensitizes rapidly and enters a transient inactive state, characterized by the presence of bound agonist. In association with GRIK2, involved in presynaptic facilitation of glutamate release at hippocampal mossy fiber synapses. In Homo sapiens (Human), this protein is Glutamate receptor ionotropic, kainate 3 (GRIK3).